Here is a 341-residue protein sequence, read N- to C-terminus: Zinc transporter 6, chloroplastic (341 aa).

The chain crosses the membrane as a helical span at residues 28–48; it reads IVAVFAIFLTSVFGVWGPVLL. The Cytoplasmic portion of the chain corresponds to 49 to 61; sequence AKYFHGKPLYDKA. A helical membrane pass occupies residues 62–82; the sequence is ILVIKCFAAGVILSTSLVHVL. Residues 83-102 are Lumenal-facing; the sequence is PEAFESLADCQVSSRHPWKD. The chain crosses the membrane as a helical span at residues 103–123; the sequence is FPFAGLVTMIGAITALLVDLT. At 124–179 the chain is on the cytoplasmic side; it reads ASEHMGHGGGGGGDGGMEYMPVGKAVGGLEMKEGKCGADLEIQENSEEEIVKMKQR. Residues 180–200 form a helical membrane-spanning segment; it reads LVSQVLEIGIIFHSVIIGVTM. The Lumenal portion of the chain corresponds to 201–211; it reads GMSQNKCTIRP. A helical transmembrane segment spans residues 212 to 232; sequence LIAALSFHQIFEGLGLGGCIA. Over 233-243 the chain is Cytoplasmic; it reads QAGFKAGTVVY. Residues 244-264 traverse the membrane as a helical segment; the sequence is MCLMFAVTTPLGIVLGMVIFA. Topologically, residues 265-280 are lumenal; it reads ATGYDDQNPNALIMEG. A helical membrane pass occupies residues 281 to 301; sequence LLGSFSSGILIYMALVDLIAL. Over 302–320 the chain is Cytoplasmic; sequence DFFHNKMLTTCGESGSRLK. A helical membrane pass occupies residues 321–341; it reads KLCFVALVLGSASMSLLALWA.

It belongs to the ZIP transporter (TC 2.A.5) family.

It is found in the plastid. Its subcellular location is the chloroplast thylakoid membrane. May play a role in the transport of zinc in the plastids. The protein is Zinc transporter 6, chloroplastic (ZIP6) of Arabidopsis thaliana (Mouse-ear cress).